Here is a 429-residue protein sequence, read N- to C-terminus: UDP-N-acetylglucosamine 1-carboxyvinyltransferase (429 aa).

Residue 22 to 23 (KN) participates in phosphoenolpyruvate binding. Residue R96 coordinates UDP-N-acetyl-alpha-D-glucosamine. Catalysis depends on C120, which acts as the Proton donor. C120 carries the 2-(S-cysteinyl)pyruvic acid O-phosphothioketal modification. Residues 125 to 129 (RPVDL), D310, and I332 contribute to the UDP-N-acetyl-alpha-D-glucosamine site.

The protein belongs to the EPSP synthase family. MurA subfamily.

It localises to the cytoplasm. The enzyme catalyses phosphoenolpyruvate + UDP-N-acetyl-alpha-D-glucosamine = UDP-N-acetyl-3-O-(1-carboxyvinyl)-alpha-D-glucosamine + phosphate. It participates in cell wall biogenesis; peptidoglycan biosynthesis. Cell wall formation. Adds enolpyruvyl to UDP-N-acetylglucosamine. This is UDP-N-acetylglucosamine 1-carboxyvinyltransferase from Caulobacter vibrioides (strain ATCC 19089 / CIP 103742 / CB 15) (Caulobacter crescentus).